A 338-amino-acid chain; its full sequence is Ketol-acid reductoisomerase (NADP(+)) (338 aa).

The region spanning 1–181 is the KARI N-terminal Rossmann domain; it reads MKVYYDKDAD…GGTKGGVIET (181 aa). NADP(+) is bound by residues 24 to 27, arginine 47, and serine 52; that span reads YGSQ. Histidine 107 is an active-site residue. Glycine 133 contributes to the NADP(+) binding site. The 146-residue stretch at 182 to 327 folds into the KARI C-terminal knotted domain; sequence NFREETETDL…SQLRAMMPWI (146 aa). Residues aspartate 190, glutamate 194, glutamate 226, and glutamate 230 each contribute to the Mg(2+) site. Position 251 (serine 251) interacts with substrate.

The protein belongs to the ketol-acid reductoisomerase family. It depends on Mg(2+) as a cofactor.

The enzyme catalyses (2R)-2,3-dihydroxy-3-methylbutanoate + NADP(+) = (2S)-2-acetolactate + NADPH + H(+). The catalysed reaction is (2R,3R)-2,3-dihydroxy-3-methylpentanoate + NADP(+) = (S)-2-ethyl-2-hydroxy-3-oxobutanoate + NADPH + H(+). The protein operates within amino-acid biosynthesis; L-isoleucine biosynthesis; L-isoleucine from 2-oxobutanoate: step 2/4. It participates in amino-acid biosynthesis; L-valine biosynthesis; L-valine from pyruvate: step 2/4. Functionally, involved in the biosynthesis of branched-chain amino acids (BCAA). Catalyzes an alkyl-migration followed by a ketol-acid reduction of (S)-2-acetolactate (S2AL) to yield (R)-2,3-dihydroxy-isovalerate. In the isomerase reaction, S2AL is rearranged via a Mg-dependent methyl migration to produce 3-hydroxy-3-methyl-2-ketobutyrate (HMKB). In the reductase reaction, this 2-ketoacid undergoes a metal-dependent reduction by NADPH to yield (R)-2,3-dihydroxy-isovalerate. This is Ketol-acid reductoisomerase (NADP(+)) from Methylobacillus flagellatus (strain ATCC 51484 / DSM 6875 / VKM B-1610 / KT).